The following is a 406-amino-acid chain: Zinc finger protein CONSTANS-LIKE 6 (406 aa).

Cys-17, Cys-20, Cys-40, and His-45 together coordinate Zn(2+). Residues 17–59 form a B box-type; atypical zinc finger; that stretch reads CDSCVKRRARWYCAADDAFLCHACDGSVHSANPLARRHERVRL. The tract at residues 63 to 95 is disordered; sequence SAGKYRHASPPHQATWHQGFTRKARTPRGGKKS. The segment covering 82 to 95 has biased composition (basic residues); the sequence is FTRKARTPRGGKKS. Residues 357–399 form the CCT domain; sequence REARVSRYREKRRTRLFSKKIRYEVRKLNAEKRPRMKGRFVKR.

This sequence belongs to the CONSTANS family.

It localises to the nucleus. The sequence is that of Zinc finger protein CONSTANS-LIKE 6 (COL6) from Arabidopsis thaliana (Mouse-ear cress).